A 201-amino-acid chain; its full sequence is Urease accessory protein UreG (201 aa).

11–18 lines the GTP pocket; that stretch reads GPVGSGKT.

The protein belongs to the SIMIBI class G3E GTPase family. UreG subfamily. Homodimer. UreD, UreF and UreG form a complex that acts as a GTP-hydrolysis-dependent molecular chaperone, activating the urease apoprotein by helping to assemble the nickel containing metallocenter of UreC. The UreE protein probably delivers the nickel.

Its subcellular location is the cytoplasm. Facilitates the functional incorporation of the urease nickel metallocenter. This process requires GTP hydrolysis, probably effectuated by UreG. The protein is Urease accessory protein UreG of Prochlorococcus marinus subsp. pastoris (strain CCMP1986 / NIES-2087 / MED4).